The following is a 342-amino-acid chain: tRNA dimethylallyltransferase (342 aa).

Residue 39–46 (GPTGSGKT) coordinates ATP. A substrate-binding site is contributed by 41–46 (TGSGKT). An interaction with substrate tRNA region spans residues 64-67 (DSMQ).

It belongs to the IPP transferase family. In terms of assembly, monomer. It depends on Mg(2+) as a cofactor.

It catalyses the reaction adenosine(37) in tRNA + dimethylallyl diphosphate = N(6)-dimethylallyladenosine(37) in tRNA + diphosphate. Functionally, catalyzes the transfer of a dimethylallyl group onto the adenine at position 37 in tRNAs that read codons beginning with uridine, leading to the formation of N6-(dimethylallyl)adenosine (i(6)A). This is tRNA dimethylallyltransferase from Chlamydia caviae (strain ATCC VR-813 / DSM 19441 / 03DC25 / GPIC) (Chlamydophila caviae).